The primary structure comprises 414 residues: Serine/threonine transporter SstT (414 aa).

Topologically, residues T2–H15 are cytoplasmic. A helical membrane pass occupies residues G16–S36. Residues K37–L45 lie on the Periplasmic side of the membrane. A helical transmembrane segment spans residues L46 to V66. The Cytoplasmic portion of the chain corresponds to M67–P83. A helical transmembrane segment spans residues I84 to F104. Over A105–D142 the chain is Periplasmic. Residues A143–L163 form a helical membrane-spanning segment. Residues R164–N179 are Cytoplasmic-facing. The chain crosses the membrane as a helical span at residues A180–V200. At S201–Q217 the chain is on the periplasmic side. The chain crosses the membrane as a helical span at residues L218–V238. Residues W239–N299 are Cytoplasmic-facing. Residues M300–I320 traverse the membrane as a helical segment. At P321–S331 the chain is on the periplasmic side. The chain crosses the membrane as a helical span at residues V332–I352. The Cytoplasmic segment spans residues P353–N414.

The protein belongs to the dicarboxylate/amino acid:cation symporter (DAACS) (TC 2.A.23) family.

It is found in the cell inner membrane. It catalyses the reaction L-serine(in) + Na(+)(in) = L-serine(out) + Na(+)(out). The enzyme catalyses L-threonine(in) + Na(+)(in) = L-threonine(out) + Na(+)(out). Involved in the import of serine and threonine into the cell, with the concomitant import of sodium (symport system). The polypeptide is Serine/threonine transporter SstT (Escherichia coli (strain UTI89 / UPEC)).